A 527-amino-acid polypeptide reads, in one-letter code: Pentatricopeptide repeat-containing protein At5g41170, mitochondrial (527 aa).

A mitochondrion-targeting transit peptide spans 1 to 35; the sequence is MAMRFFQLHRNRLVKGNSGKALSFSRLLDLSFWVR. PPR repeat units follow at residues 36–70, 71–105, 106–140, 141–175, 176–210, 211–245, 246–280, 281–315, 316–350, 351–385, 386–420, 424–458, 459–493, and 494–527; these read AFCN…RPLP, SIID…GVSH, DLYT…GFEP, DIVT…GIKP, DVVM…GIRP, DVVM…KIKP, DVIT…SIAP, NIFT…GCFP, DVVA…GLTG, NTIT…GVPP, NIRT…EMDG, NIWT…EMDI, GIIT…GVKP, and NVVT…DGVS.

This sequence belongs to the PPR family. P subfamily.

Its subcellular location is the mitochondrion. The protein is Pentatricopeptide repeat-containing protein At5g41170, mitochondrial of Arabidopsis thaliana (Mouse-ear cress).